The sequence spans 285 residues: Small ribosomal subunit biogenesis GTPase RsgA (285 aa).

The CP-type G domain occupies 61 to 215 (KNQLIRPKVA…IIDSPGFSSF (155 aa)). Residues 110–113 (TKID) and 159–167 (GQTGVGKTS) contribute to the GTP site. Zn(2+)-binding residues include cysteine 239, cysteine 244, histidine 246, and cysteine 254.

It belongs to the TRAFAC class YlqF/YawG GTPase family. RsgA subfamily. Monomer. Associates with 30S ribosomal subunit, binds 16S rRNA. It depends on Zn(2+) as a cofactor.

Its subcellular location is the cytoplasm. Its function is as follows. One of several proteins that assist in the late maturation steps of the functional core of the 30S ribosomal subunit. Helps release RbfA from mature subunits. May play a role in the assembly of ribosomal proteins into the subunit. Circularly permuted GTPase that catalyzes slow GTP hydrolysis, GTPase activity is stimulated by the 30S ribosomal subunit. The polypeptide is Small ribosomal subunit biogenesis GTPase RsgA (Mesomycoplasma hyopneumoniae (strain J / ATCC 25934 / NCTC 10110) (Mycoplasma hyopneumoniae)).